Consider the following 1948-residue polypeptide: MGENEDEKQAQASQVFENFVQATTCKGTLQAFNILTCLLDLDPLDHRNFYTQLKSKVNTWKAKALWHKLDKRGSHKEYKRGKACSNTKCLIVGGGPCGLRTAIELAYLGAKVVVVEKRDTFSRNNVLHLWPFTIHDLRGLGAKKFYGKFCAGSIDHISIRQLQLILFKVALMLGVEIHVNVEFVRVREPPKDQENRKIGWRAEFLPADHALSNFEFDVIIGADGHRNTLEGFRRKEFRGKLAIAITANFINRNSTAEAKVEEISGVAFIFNQKFFQDLKEETGIDLENIVYYKDSTHYFVMTAKKQSLLDKGVILNDYIDTEMLLCAENVNQDNLLSYAREAADFATNYQLPSLDFAINHNGQPDVAMFDFTSMYASENAALMRERQAHQLLVALVGDSLLEPFWPMGTGCARGFLAAFDTAWMVKSWDQGTPPLEVLAERESLYRLLPQTTPENINKNFEQYTLDPATRYPNLNVHCVRPHQVKHLYITKEMDRFPLERWGSVRRSASLSRRESDIRPNKLLTWCQQQTKGYQHVRVTDLTTSWRSGLALCAIIHSFRPELINFDSLNENDVVENNQLAFDVAKREFGILPVTTGKEMASTQEPDKLSMVMYLSKFYELFRGTPLRPMDSRRKNYGENADFGLGKTFFQNNYLNLTLPRKRTPRVDAQTEENDVNKRRRQGFNNLEELPAFSSRSLGSSQEYAKESGNQNKVKYMANQLLAKFEENTRNPSALKQDCPRVSGMGKPVLCSASRPPGTSHCPKLEESTPRLPPPLKRQFSSTVATGQVLRELNQVPASGECPGRPWRARAKSDLQLGGAENLATLPPTCQGALALSGVLRRLQQVEEKVLQKRAQNLANREFHTKNIKEKAAHLASMFGHGDLPQDKLLSKRVPHAHPPSPPSCLPSPDPAAAPSPPAADSVSPARKVLTVGKVSSGIGAAAEVLVNLYLNDHRPKTQATSPDLESLRKAEFPLSLGGRDTCYFCKKRVYVMERLSAEGHFFHRECFRCSVCAAILRVAAYAFDCDEGKFYCKLHFAHCKTSSKQRKRRAELNQQREEEGTWPEQEAARRDVPAESSCAVAAISTPEGSPPDEPISPKKSKSVPKPNSRPMEVEATSPRPSEWTSVRIGPGQDGQDVLAVRVLVTSEDSSSDTESDSGSIIGPCTEACEERPRLPESPPLSQPLTRHISLRETLTQPVSLLLHHKEPQAVPGLQRAYSLQSPSKYQNWRRKFQSNSTPMNQRALSPPKEPPPSSSSSSPSLPSSFSSASVPGHTTDDSSSPQVTYNLHSPQISRDDVSPTPIYLRRARAQGITKEIPLYLPHSPMLESTEHCLVSPDGEELRSPEEISASDGCQKALALGNSESTHKDSYPVSGKDPYLPNQMLALGAAGNTGDLSEESRMGQTGGAELSKERKLGLKKLVLTEEQKTMLLDWNDYTQEHKAGERLAQEKAENGRGNSLKPICSSTLSQAVKEKLLSQKKALGETRTPAAKAPREREVPPPKSPLRLIANAIFRSLLPSSEAGKKTSSKPETKTLPRGQPHAFTRSFSFRKLGSSKDGDQQSPGRHMAKKASAFFSLASPTSKAAQASDLSPPNPILRSRSLPNRPSKMFFATTSLPPSSKVEDVPTLLEKVSLQDAAQGPKKGASHISPLGLKDKSFESFLQECKERKDIGDFFNSPKEKGPPGNRVPSLEKLVQPVDSTSMGQVAHPSSTGQDAQAAVRTQAGKEGSSLVSSLVLVSGPGAPVTEDTSSPTSSSAEEDVETQLSSRLKEKIPRRRRKLEKQMAKQEELKRLHKAQAIQRQLEEVEERQRTSEIQGVRLEKVLRGETADSGTQDEAQLLQEWFKLVLEKNKLMRYESELLIMAQELELEDHQSRLEQKLRQKMLKDEGQKDENDLKEEQEIFEEMMQVIEQRNKLVDSLEEQRIKERTQDQHFENFVLSRGCQLSRT.

Residues 2–494 (GENEDEKQAQ…KHLYITKEMD (493 aa)) are monooxygenase domain. FAD is bound by residues cysteine 97, 116 to 118 (EKR), 123 to 125 (RNN), phenylalanine 183, tyrosine 298, and aspartate 398. Residues 516-619 (DIRPNKLLTW…MVMYLSKFYE (104 aa)) form the Calponin-homology (CH) domain. A Phosphoserine modification is found at serine 631. Residues 660-681 (RKRTPRVDAQTEENDVNKRRRQ) carry the Nuclear localization signal motif. 3 disordered regions span residues 664–709 (PRVD…ESGN), 753–776 (SRPP…PPLK), and 891–923 (KRVP…DSVS). Residues 693-709 (SSRSLGSSQEYAKESGN) show a composition bias toward polar residues. Pro residues predominate over residues 896–917 (AHPPSPPSCLPSPDPAAAPSPP). Positions 980–1042 (DTCYFCKKRV…KLHFAHCKTS (63 aa)) constitute an LIM zinc-binding domain. Zn(2+) is bound by residues cysteine 982, cysteine 985, histidine 1003, cysteine 1006, cysteine 1009, cysteine 1012, cysteine 1032, and histidine 1035. Disordered stretches follow at residues 1045–1134 (QRKR…GQDG), 1146–1185 (SEDS…QPLT), and 1233–1298 (QSNS…DDVS). Over residues 1050–1059 (AELNQQREEE) the composition is skewed to basic and acidic residues. The span at 1233–1243 (QSNSTPMNQRA) shows a compositional bias: polar residues. Residues 1254–1271 (SSSSSPSLPSSFSSASVP) are compositionally biased toward low complexity. A compositionally biased stretch (polar residues) spans 1277 to 1292 (DSSSPQVTYNLHSPQI). The interaction with MAPK1 stretch occupies residues 1300–1339 (TPIYLRRARAQGITKEIPLYLPHSPMLESTEHCLVSPDGE). Disordered regions lie at residues 1478–1505 (QKKA…KSPL), 1519–1622 (SSEA…SSKV), 1672–1726 (GDFF…QAGK), and 1739–1767 (SGPG…QLSS). Positions 1522–1534 (AGKKTSSKPETKT) are enriched in basic and acidic residues. A compositionally biased stretch (low complexity) spans 1570–1579 (KASAFFSLAS). A compositionally biased stretch (polar residues) spans 1580–1591 (PTSKAAQASDLS). Residues 1672–1682 (GDFFNSPKEKG) are compositionally biased toward basic and acidic residues. Residue serine 1677 is modified to Phosphoserine. 2 stretches are compositionally biased toward polar residues: residues 1698–1715 (VDST…TGQD) and 1747–1756 (EDTSSPTSSS). The region spanning 1786 to 1936 (KQEELKRLHK…ERTQDQHFEN (151 aa)) is the bMERB domain.

The protein belongs to the Mical family. In terms of assembly, interacts with PLXNA4. Interacts with RAB1B. Interacts with MAPK1/ERK2. Interacts with RAB35, RAB8A, RAB10, RAB13 and RAB15 (in their GTP-bound forms); binding to RAB35 is of low affinity compared to other Rab proteins; at least in case of RAB8A may bind 2 molecules of RAB8A simultaneously through a high and a low affinity binding site, respectively. May interact with MAPK1/ERK2. FAD serves as cofactor.

It is found in the nucleus. Its subcellular location is the cytoplasm. The catalysed reaction is L-methionyl-[F-actin] + NADPH + O2 + H(+) = L-methionyl-(R)-S-oxide-[F-actin] + NADP(+) + H2O. Methionine monooxygenase that promotes depolymerization of F-actin by mediating oxidation of residues 'Met-44' and 'Met-47' on actin to form methionine-sulfoxide, resulting in actin filament disassembly and preventing repolymerization. Regulates the disassembly of branched actin networks also by oxidizing ARP3B-containing ARP2/3 complexes leading to ARP3B dissociation from the network. Acts as a key regulator of the SRF signaling pathway elicited by nerve growth factor and serum: mediates oxidation and subsequent depolymerization of nuclear actin, leading to increase MKL1/MRTF-A presence in the nucleus and promote SRF:MKL1/MRTF-A-dependent gene transcription. Does not activate SRF:MKL1/MRTF-A through RhoA. This Rattus norvegicus (Rat) protein is [F-actin]-monooxygenase MICAL2.